We begin with the raw amino-acid sequence, 168 residues long: Large ribosomal subunit protein uL10 (168 aa).

Belongs to the universal ribosomal protein uL10 family. As to quaternary structure, part of the ribosomal stalk of the 50S ribosomal subunit. The N-terminus interacts with L11 and the large rRNA to form the base of the stalk. The C-terminus forms an elongated spine to which L12 dimers bind in a sequential fashion forming a multimeric L10(L12)X complex.

In terms of biological role, forms part of the ribosomal stalk, playing a central role in the interaction of the ribosome with GTP-bound translation factors. This is Large ribosomal subunit protein uL10 from Levilactobacillus brevis (strain ATCC 367 / BCRC 12310 / CIP 105137 / JCM 1170 / LMG 11437 / NCIMB 947 / NCTC 947) (Lactobacillus brevis).